The chain runs to 335 residues: Anthranilate phosphoribosyltransferase (335 aa).

5-phospho-alpha-D-ribose 1-diphosphate is bound by residues G79, 82–83, S87, 89–92, 107–115, and S119; these read GD, NIST, and KHGNRSITS. G79 contacts anthranilate. Position 91 (S91) interacts with Mg(2+). An anthranilate-binding site is contributed by N110. R165 serves as a coordination point for anthranilate. Mg(2+) contacts are provided by D224 and E225.

It belongs to the anthranilate phosphoribosyltransferase family. As to quaternary structure, homodimer. Requires Mg(2+) as cofactor.

It carries out the reaction N-(5-phospho-beta-D-ribosyl)anthranilate + diphosphate = 5-phospho-alpha-D-ribose 1-diphosphate + anthranilate. The protein operates within amino-acid biosynthesis; L-tryptophan biosynthesis; L-tryptophan from chorismate: step 2/5. In terms of biological role, catalyzes the transfer of the phosphoribosyl group of 5-phosphorylribose-1-pyrophosphate (PRPP) to anthranilate to yield N-(5'-phosphoribosyl)-anthranilate (PRA). This is Anthranilate phosphoribosyltransferase from Lactococcus lactis subsp. lactis (strain IL1403) (Streptococcus lactis).